A 713-amino-acid chain; its full sequence is Nuclear poly(A) polymerase 1 (713 aa).

Residues 91–93 (FGS), 103–106 (ADID), D159, Y229, and 238–239 (GI) each bind ATP. D104, D106, and D159 together coordinate Mg(2+). Positions 480 to 555 (FVFPGGVRPS…TLTDQPRNSK (76 aa)) are disordered. Residues 507–526 (SSTSSAPAATTTTTEMSSES) show a composition bias toward low complexity.

Belongs to the poly(A) polymerase family. As to quaternary structure, monomer. Forms a complex with cleavage and polyadenylation specificity factor (CPSF) subunit PAPS4. Mg(2+) serves as cofactor. Mn(2+) is required as a cofactor. As to expression, expressed in stems, cotyledons, hypocotyls, radicle, leaves, and, to a lower extent, in roots (including primary and secondary roots as well as root tips) and flowers. In radicle, roots and leaves, mainly present in vascular tissues.

The protein resides in the nucleus. It carries out the reaction RNA(n) + ATP = RNA(n)-3'-adenine ribonucleotide + diphosphate. Essential protein. Polymerase that creates the 3'-poly(A) tail of mRNA's. Also required for the endoribonucleolytic cleavage reaction at some polyadenylation sites. May acquire specificity through interaction with a cleavage and polyadenylation specificity factor (CPSF) at its C-terminus. The polypeptide is Nuclear poly(A) polymerase 1 (Arabidopsis thaliana (Mouse-ear cress)).